The sequence spans 176 residues: Ribosome maturation factor RimM (176 aa).

Residues 93-172 (EGEFFYFDVL…EILTKDAKSI (80 aa)) enclose the PRC barrel domain.

It belongs to the RimM family. As to quaternary structure, binds ribosomal protein uS19.

It localises to the cytoplasm. In terms of biological role, an accessory protein needed during the final step in the assembly of 30S ribosomal subunit, possibly for assembly of the head region. Essential for efficient processing of 16S rRNA. May be needed both before and after RbfA during the maturation of 16S rRNA. It has affinity for free ribosomal 30S subunits but not for 70S ribosomes. This chain is Ribosome maturation factor RimM, found in Campylobacter curvus (strain 525.92).